Reading from the N-terminus, the 75-residue chain is Cytochrome c oxidase assembly factor 5 (75 aa).

The region spanning 28–66 is the CHCH domain; the sequence is QSDCVLQEGKSPKECLKEGYCKALQVTFFECKRSILDNR. The Cx10C motif signature appears at 31-42; that stretch reads CVLQEGKSPKEC. Cystine bridges form between Cys-31–Cys-58 and Cys-42–Cys-48. The Cx9C motif motif lies at 48-58; that stretch reads CKALQVTFFEC.

It belongs to the PET191 family.

Its function is as follows. Involved in an early step of the mitochondrial complex IV assembly process. This Xenopus laevis (African clawed frog) protein is Cytochrome c oxidase assembly factor 5 (coa5).